The chain runs to 329 residues: MAVLSKPVAIPKSGFSLIPVIDMSDPESKHALVKACEDFGFFKVINHGVSAELVSVLEHETVDFFSLPKSEKTQVAGYPFGYGNSKIGRNGDVGWVEYLLMNANHDSGSGPLFPSLLKSPGTFRNALEEYTTSVRKMTFDVLEKITDGLGIKPRNTLSKLVSDQNTDSILRLNHYPPCPLSNKKTNGGKNVIGFGEHTDPQIISVLRSNNTSGLQINLNDGSWISVPPDHTSFFFNVGDSLQVMTNGRFKSVRHRVLANCKKSRVSMIYFAGPSLTQRIAPLTCLIDNEDERLYEEFTWSEYKNSTYNSRLSDNRLQQFERKTIKNLLN.

Positions 165 to 273 constitute a Fe2OG dioxygenase domain; that stretch reads NTDSILRLNH…RVSMIYFAGP (109 aa). Positions 197, 199, and 254 each coordinate Fe cation. Arg-264 is a catalytic residue. 2-oxoglutarate is bound at residue Arg-264.

It belongs to the iron/ascorbate-dependent oxidoreductase family. GA2OX subfamily. The cofactor is Fe(2+). In terms of tissue distribution, preferentially expressed in flowers, siliques, and upper stems. Not expressed in the apex.

The enzyme catalyses gibberellin A1 + 2-oxoglutarate + O2 = gibberellin A8 + succinate + CO2. The protein operates within plant hormone biosynthesis; gibberellin biosynthesis. Functionally, catalyzes the 2-beta-hydroxylation of several biologically active gibberellins, leading to the homeostatic regulation of their endogenous level. Catabolism of gibberellins (GAs) plays a central role in plant development. Converts GA9/GA20 to GA51/GA29 and GA4/GA1 to GA34/GA8. This is Gibberellin 2-beta-dioxygenase 1 (GA2OX1) from Arabidopsis thaliana (Mouse-ear cress).